The primary structure comprises 325 residues: MNALTAVQNNAVDSGQDYSGFTLIPSAQSPRLLELTFTEQTTKQFLEQVAEWPVQALEYKSFLRFRVGKILDDLCANQLQPLLLKTLLNRAEGALLINAVGVDDVKQADEMVKLATAVAHLIGRSNFDAMSGQYYARFVVKNVDNSDSYLRQPHRVMELHNDGTYVEEITDYVLMMKIDEQNMQGGNSLLLHLDDWEHLDHYFRHPLARRPMRFAAPPSKNVSKDVFHPVFDVDQQGRPVMRYIDQFVQPKDFEEGVWLSELSDAIETSKGILSVPVPVGKFLLINNLFWLHGRDRFTPHPDLRRELMRQRGYFAYATHHYQTHQ.

H160, D162, and H292 together coordinate Fe cation.

Belongs to the glutarate hydroxylase family. As to quaternary structure, homotetramer. Requires Fe(2+) as cofactor.

It catalyses the reaction glutarate + 2-oxoglutarate + O2 = (S)-2-hydroxyglutarate + succinate + CO2. Its pathway is amino-acid degradation. In terms of biological role, acts as an alpha-ketoglutarate-dependent dioxygenase catalyzing hydroxylation of glutarate (GA) to L-2-hydroxyglutarate (L2HG). Functions in a L-lysine degradation pathway that proceeds via cadaverine, glutarate and L-2-hydroxyglutarate. This Escherichia coli O17:K52:H18 (strain UMN026 / ExPEC) protein is Glutarate 2-hydroxylase.